The chain runs to 96 residues: Small ribosomal subunit protein bS6 (96 aa).

The protein belongs to the bacterial ribosomal protein bS6 family.

Functionally, binds together with bS18 to 16S ribosomal RNA. The polypeptide is Small ribosomal subunit protein bS6 (Streptomyces griseus subsp. griseus (strain JCM 4626 / CBS 651.72 / NBRC 13350 / KCC S-0626 / ISP 5235)).